The following is a 373-amino-acid chain: Cyclin-A3-1 (373 aa).

The interval 50-80 (AVVLKPQPAPRGGKRAASHAAEPKKPAPPPA) is disordered.

Belongs to the cyclin family. Cyclin AB subfamily.

The chain is Cyclin-A3-1 (CYCA3-1) from Oryza sativa subsp. japonica (Rice).